Here is a 400-residue protein sequence, read N- to C-terminus: Acetate kinase (400 aa).

Residue Asn10 coordinates Mg(2+). ATP is bound at residue Lys17. A substrate-binding site is contributed by Arg91. Catalysis depends on Asp150, which acts as the Proton donor/acceptor. Residues 210-214 (HLGNG), 285-287 (DCR), and 333-337 (GIGEN) contribute to the ATP site. Glu387 provides a ligand contact to Mg(2+).

This sequence belongs to the acetokinase family. In terms of assembly, homodimer. Mg(2+) is required as a cofactor. It depends on Mn(2+) as a cofactor.

It is found in the cytoplasm. It carries out the reaction acetate + ATP = acetyl phosphate + ADP. Its pathway is metabolic intermediate biosynthesis; acetyl-CoA biosynthesis; acetyl-CoA from acetate: step 1/2. In terms of biological role, catalyzes the formation of acetyl phosphate from acetate and ATP. Can also catalyze the reverse reaction. This is Acetate kinase from Pectobacterium atrosepticum (strain SCRI 1043 / ATCC BAA-672) (Erwinia carotovora subsp. atroseptica).